The following is a 122-amino-acid chain: Large ribosomal subunit protein bL12 (122 aa).

It belongs to the bacterial ribosomal protein bL12 family. As to quaternary structure, homodimer. Part of the ribosomal stalk of the 50S ribosomal subunit. Forms a multimeric L10(L12)X complex, where L10 forms an elongated spine to which 2 to 4 L12 dimers bind in a sequential fashion. Binds GTP-bound translation factors.

Its function is as follows. Forms part of the ribosomal stalk which helps the ribosome interact with GTP-bound translation factors. Is thus essential for accurate translation. This chain is Large ribosomal subunit protein bL12, found in Cellvibrio japonicus (strain Ueda107) (Pseudomonas fluorescens subsp. cellulosa).